Here is a 399-residue protein sequence, read N- to C-terminus: Keratin, type I cytoskeletal 19 (399 aa).

A head region spans residues 1–78 (MTSYSYRQSS…ATSDGLLAGN (78 aa)). Position 7 is an omega-N-methylarginine (Arg7). A phosphoserine mark is found at Ser14 and Ser22. Arg24 bears the Asymmetric dimethylarginine; alternate mark. Arg24 is subject to Omega-N-methylarginine; alternate. Arg32 bears the Omega-N-methylarginine mark. Residues Ser35 and Ser40 each carry the phosphoserine modification. 2 positions are modified to omega-N-methylarginine: Arg43 and Arg51. Phosphoserine is present on residues Ser57 and Ser71. The segment at 79–114 (EKLTMQNLNDRLASYLEKVRALEEANGDLEVKIRDW) is coil 1A. The 312-residue stretch at 79–390 (EKLTMQNLND…NLLEGQDAYF (312 aa)) folds into the IF rod domain. A linker 1 region spans residues 115-132 (YQKQGPGPARDYSHYFKT). The segment at 133–224 (IEDLRDQILG…KNHEEEMSVL (92 aa)) is coil 1B. Residues 225-247 (KGQVGGQVSVEVDSAPGIDLAKI) are linker 12. Positions 243–389 (DLAKILSDMR…RNLLEGQDAY (147 aa)) are necessary for interaction with PNN. The coil 2 stretch occupies residues 248-386 (LSDMRSQYEV…ATYRNLLEGQ (139 aa)). Thr322 bears the Phosphothreonine mark. Residues 387 to 399 (DAYFNDLSLAKAL) are rod-like helical tail. Residue Ser394 is modified to Phosphoserine.

The protein belongs to the intermediate filament family. As to quaternary structure, heterotetramer of two type I and two type II keratins. Interacts with PNN and the actin-binding domain of DMD.

Functionally, involved in the organization of myofibers. Together with KRT8, helps to link the contractile apparatus to dystrophin at the costameres of striated muscle. This chain is Keratin, type I cytoskeletal 19 (KRT19), found in Bos taurus (Bovine).